Consider the following 490-residue polypeptide: Probable glycine dehydrogenase (decarboxylating) subunit 2 (490 aa).

K273 carries the N6-(pyridoxal phosphate)lysine modification.

Belongs to the GcvP family. C-terminal subunit subfamily. As to quaternary structure, the glycine cleavage system is composed of four proteins: P, T, L and H. In this organism, the P 'protein' is a heterodimer of two subunits. Requires pyridoxal 5'-phosphate as cofactor.

It catalyses the reaction N(6)-[(R)-lipoyl]-L-lysyl-[glycine-cleavage complex H protein] + glycine + H(+) = N(6)-[(R)-S(8)-aminomethyldihydrolipoyl]-L-lysyl-[glycine-cleavage complex H protein] + CO2. In terms of biological role, the glycine cleavage system catalyzes the degradation of glycine. The P protein binds the alpha-amino group of glycine through its pyridoxal phosphate cofactor; CO(2) is released and the remaining methylamine moiety is then transferred to the lipoamide cofactor of the H protein. This Staphylococcus aureus (strain Newman) protein is Probable glycine dehydrogenase (decarboxylating) subunit 2.